The sequence spans 265 residues: Mlc titration factor A (265 aa).

4 residues coordinate Zn(2+): His111, His148, His152, and Glu211.

This sequence belongs to the MtfA family. In terms of assembly, interacts with Mlc. Zn(2+) is required as a cofactor.

It is found in the cytoplasm. Involved in the modulation of the activity of the glucose-phosphotransferase system (glucose-PTS). Interacts with the transcriptional repressor Mlc, preventing its interaction with DNA and leading to the modulation of expression of genes regulated by Mlc, including ptsG, which encodes the PTS system glucose-specific EIICB component. Functionally, shows zinc-dependent metallopeptidase activity. The chain is Mlc titration factor A from Shigella sonnei (strain Ss046).